We begin with the raw amino-acid sequence, 65 residues long: Large ribosomal subunit protein bL35 (65 aa).

Residues 1–28 (MPKMKTNRSAAKRFGKTGSGKFTRRRQN) form a disordered region.

This sequence belongs to the bacterial ribosomal protein bL35 family.

The sequence is that of Large ribosomal subunit protein bL35 from Solidesulfovibrio magneticus (strain ATCC 700980 / DSM 13731 / RS-1) (Desulfovibrio magneticus).